Here is a 372-residue protein sequence, read N- to C-terminus: Glutamate 5-kinase (372 aa).

Lysine 14 serves as a coordination point for ATP. Residues serine 54, aspartate 141, and asparagine 153 each coordinate substrate. An ATP-binding site is contributed by 173 to 174 (TD). A PUA domain is found at 280–358 (RGTLTLDEGA…DEIEKLLGYV (79 aa)).

Belongs to the glutamate 5-kinase family.

It localises to the cytoplasm. It catalyses the reaction L-glutamate + ATP = L-glutamyl 5-phosphate + ADP. Its pathway is amino-acid biosynthesis; L-proline biosynthesis; L-glutamate 5-semialdehyde from L-glutamate: step 1/2. Functionally, catalyzes the transfer of a phosphate group to glutamate to form L-glutamate 5-phosphate. The polypeptide is Glutamate 5-kinase (Stutzerimonas stutzeri (strain A1501) (Pseudomonas stutzeri)).